Here is a 27-residue protein sequence, read N- to C-terminus: DLWNSIKDMAAAAGRAALNAVTGMVNQ.

Functionally, has antimicrobial activity against the Gram-positive bacterium M.luteus and the yeast C.albicans. Has hemolytic activity on human and duck erythrocytes. The sequence is that of Dermaseptin-like peptide from Schistosoma mansoni (Blood fluke).